The chain runs to 229 residues: 2-C-methyl-D-erythritol 4-phosphate cytidylyltransferase (229 aa).

Belongs to the IspD/TarI cytidylyltransferase family. IspD subfamily. As to quaternary structure, homodimer.

It catalyses the reaction 2-C-methyl-D-erythritol 4-phosphate + CTP + H(+) = 4-CDP-2-C-methyl-D-erythritol + diphosphate. The protein operates within isoprenoid biosynthesis; isopentenyl diphosphate biosynthesis via DXP pathway; isopentenyl diphosphate from 1-deoxy-D-xylulose 5-phosphate: step 2/6. Functionally, catalyzes the formation of 4-diphosphocytidyl-2-C-methyl-D-erythritol from CTP and 2-C-methyl-D-erythritol 4-phosphate (MEP). This chain is 2-C-methyl-D-erythritol 4-phosphate cytidylyltransferase, found in Wigglesworthia glossinidia brevipalpis.